A 245-amino-acid polypeptide reads, in one-letter code: Probable phosphatase CKO_02035 (245 aa).

Positions 7, 9, 15, 40, 73, 101, 131, 192, and 194 each coordinate Zn(2+).

This sequence belongs to the PHP family. As to quaternary structure, homotrimer. Requires Zn(2+) as cofactor.

This Citrobacter koseri (strain ATCC BAA-895 / CDC 4225-83 / SGSC4696) protein is Probable phosphatase CKO_02035.